A 500-amino-acid chain; its full sequence is NAD(P)H-quinone oxidoreductase chain 4, chloroplastic (500 aa).

14 helical membrane-spanning segments follow: residues 4 to 24 (FYWLTIIVVLPISAGSLIALL), 37 to 57 (ICICLFELLLTTYVFCYHFQL), 80 to 100 (LGIDGLSIGPILLTGFITTLA), 113 to 130 (LFHFLMLAMYSGQIGLFS), 134 to 154 (LLLFFIMWELELIPVYLLLSM), 167 to 187 (FILYTAGGSIFLLMGVLGMGL), 208 to 228 (ALEIIFYFGFLIAYAVKSPII), 242 to 262 (HYSTCMLLAGILLKMGAYGLV), 272 to 292 (AHSIFSPWLMIVGTIQIIYAA), 305 to 325 (IAYSSVSHMGFIIIGISSITD), 330 to 350 (GAILQIISHGFIGAALFFLAG), 386 to 406 (LALPGMSGFVAELVIFLGIIT), 416 to 436 (ILITFVMAIGMILTPIYSLSM), and 462 to 482 (IFILICILLPIIGIGIYPDFV).

This sequence belongs to the complex I subunit 4 family.

The protein resides in the plastid. It is found in the chloroplast thylakoid membrane. It catalyses the reaction a plastoquinone + NADH + (n+1) H(+)(in) = a plastoquinol + NAD(+) + n H(+)(out). The enzyme catalyses a plastoquinone + NADPH + (n+1) H(+)(in) = a plastoquinol + NADP(+) + n H(+)(out). This is NAD(P)H-quinone oxidoreductase chain 4, chloroplastic from Nuphar advena (Common spatterdock).